The sequence spans 217 residues: Meiotically up-regulated gene 37 protein (217 aa).

Its function is as follows. Has a role in meiosis. This chain is Meiotically up-regulated gene 37 protein (mug37), found in Schizosaccharomyces pombe (strain 972 / ATCC 24843) (Fission yeast).